Consider the following 448-residue polypeptide: StAR-related lipid transfer protein 3 (448 aa).

Residues 47–219 (FSDVRRTFCL…YSPPESLAGS (173 aa)) form the MENTAL domain. 4 consecutive transmembrane segments (helical) span residues 53-73 (TFCL…IIEL), 96-116 (FFDI…GYAA), 122-142 (WWVI…KVIL), and 150-170 (AFGY…TWFL). Positions 208-214 (QFYSPPE) match the FFAT motif. An START domain is found at 232-445 (AVTEQEKAFV…LRQRINEVHV (214 aa)).

The protein belongs to the STARD3 family. Homodimer. Post-translationally, phosphorylated. Phosphorylation allows the tethering of two membranes that participates in the formation of ER-endosome contacts. Phosphorylation of FFAT motif drives membrane tethering between the endoplasmic reticulum and late endosomes that in turn allows the efficient transport of sterol mediated by the START domain.

It localises to the late endosome membrane. The catalysed reaction is cholesterol(in) = cholesterol(out). In terms of biological role, sterol-binding protein that mediates cholesterol transport from the endoplasmic reticulum to endosomes. The sterol transport mechanism is triggered by phosphorylation of FFAT motif that leads to membrane tethering between the endoplasmic reticulum and late endosomes. Acts as a lipid transfer protein that redirects sterol to the endosome at the expense of the cell membrane and favors membrane formation inside endosomes. The chain is StAR-related lipid transfer protein 3 from Danio rerio (Zebrafish).